Reading from the N-terminus, the 219-residue chain is Protein VERNALIZATION 2 (219 aa).

A CCT domain is found at 138 to 180; it reads REAKVMRYREKKKRRRYEKQIRYESRKAYAEMRPRVKGRFAKV.

As to expression, mainly expressed in leaves, and at low levels in the shoot apical meristem (SAM).

It is found in the nucleus. Functionally, involved in the regulation of vernalization; this process in essential for flowering in cv. Bd29-1 but seems do not occur in cv. Bd21. The protein is Protein VERNALIZATION 2 of Brachypodium distachyon (Purple false brome).